A 1379-amino-acid polypeptide reads, in one-letter code: DNA-directed RNA polymerase subunit beta'' (1379 aa).

Residues cysteine 220, cysteine 293, cysteine 300, and cysteine 303 each coordinate Zn(2+).

This sequence belongs to the RNA polymerase beta' chain family. RpoC2 subfamily. As to quaternary structure, in plastids the minimal PEP RNA polymerase catalytic core is composed of four subunits: alpha, beta, beta', and beta''. When a (nuclear-encoded) sigma factor is associated with the core the holoenzyme is formed, which can initiate transcription. It depends on Zn(2+) as a cofactor.

The protein localises to the plastid. It localises to the chloroplast. The enzyme catalyses RNA(n) + a ribonucleoside 5'-triphosphate = RNA(n+1) + diphosphate. In terms of biological role, DNA-dependent RNA polymerase catalyzes the transcription of DNA into RNA using the four ribonucleoside triphosphates as substrates. This is DNA-directed RNA polymerase subunit beta'' from Crucihimalaya wallichii (Rock-cress).